A 154-amino-acid chain; its full sequence is Melatonin receptor type 1A (154 aa).

Residues 1 to 19 (YCYICHSLKYDRWYSNRNS) lie on the Cytoplasmic side of the membrane. A helical membrane pass occupies residues 20–40 (LCCVFLICVLTLVAIVPNLCM). The Extracellular portion of the chain corresponds to 41 to 62 (GTLQYDPRIYSCTFAQSVSSAY). Residues 63–83 (TIAVVVFHFLVPMVIVIFRYL) form a helical membrane-spanning segment. The Cytoplasmic portion of the chain corresponds to 84–115 (RIWVLVLQIRWRAKPENNPRLKPQDFRNFVTM). A helical membrane pass occupies residues 116–136 (FVVFVLFAICWAPLNFIGLAV). The Extracellular segment spans residues 137–149 (ASDPASMAPRIPE).

It belongs to the G-protein coupled receptor 1 family.

Its subcellular location is the cell membrane. In terms of biological role, high affinity receptor for melatonin. Likely to mediate the reproductive and circadian actions of melatonin. The activity of this receptor is mediated by pertussis toxin sensitive G proteins that inhibit adenylate cyclase activity. This Sus scrofa (Pig) protein is Melatonin receptor type 1A (MTNR1A).